The primary structure comprises 193 residues: Protein PATRONUS 1 (193 aa).

The DEN-box motif lies at 14 to 16 (DEN). Positions 46-49 (RKAL) match the D-box motif.

As to quaternary structure, interacts directly with the anaphase promoting complex/cyclosome (APC/C) through the CDC27B and CDC20-1 subunits. Expressed in somatic and reproductive tissues. Expressed in inflorescence, young buds, roots and basal portion of young leaves. Expressed in proliferating cells such as apical meristems of roots and shoots, expanding cotyledons and leaves, root vascular tissues, and in stomatal precursor cells.

Its subcellular location is the nucleus. The protein localises to the cytoplasm. Its function is as follows. Required for the maintenance of centromeric cohesion during interkinesis, until meiosis II. Required for regular configuration and segregation of sister chromatids in meiosis II. Also required for centromere cohesion during meiosis I. Involved in spindle organization at the end of telophase I and in meiosis II. Required to prevent precocious release of pericentromeric cohesins during meiosis, but not for cohesion establishment and monopolar orientation of kinetochores at meiosis I. Involved also in somatic development. Regulates mitotic cell division and ploidy stability in somatic cell types. May be involved in the organization of microtubules dynamics. Involved in abiotic stresses and mono- or divalent ions tolerance and may play a role in maintaining meristematic activity under saline conditions. PANS1 and GIG1 are part of a network linking centromere cohesion and cell cycle progression through control of APC/C activity. Regulates the number of dividing cells in root meristem and is necessary for the anaphase onset control through an APC/C-mediated pathway. Involved in maintaining correct chromosome arm cohesion under stress conditions. This chain is Protein PATRONUS 1, found in Arabidopsis thaliana (Mouse-ear cress).